The primary structure comprises 185 residues: DNA-directed RNA polymerase 21 kDa subunit (185 aa).

This sequence belongs to the poxviridae DNA-directed RNA polymerase 22 kDa subunit family. The DNA-dependent RNA polymerase used for intermediate and late genes expression consists of eight subunits Rpo30/OPG66, Rpo7/OPG90, Rpo22/OPG103, Rpo147/OPG105, Rpo18/OPG119, Rpo19/OPG131, Rpo132/OPG151 and Rpo35/OPG156. The same holoenzyme, with the addition of the transcription-specificity factor OPG109, is used for early gene expression.

It localises to the virion. The catalysed reaction is RNA(n) + a ribonucleoside 5'-triphosphate = RNA(n+1) + diphosphate. Its function is as follows. Part of the DNA-dependent RNA polymerase which catalyzes the transcription of viral DNA into RNA using the four ribonucleoside triphosphates as substrates. Responsible for the transcription of early, intermediate and late genes. DNA-dependent RNA polymerase associates with the early transcription factor (ETF), itself composed of OPG118 and OPG133, thereby allowing the early genes transcription. Late transcription, and probably also intermediate transcription, require newly synthesized RNA polymerase. This Oryctolagus cuniculus (Rabbit) protein is DNA-directed RNA polymerase 21 kDa subunit (OPG103).